Consider the following 451-residue polypeptide: Tubulin alpha chain (451 aa).

Glutamine 11 contributes to the GTP binding site. Position 40 is an N6-acetyllysine (lysine 40). GTP-binding residues include glutamate 71, serine 140, glycine 144, threonine 145, threonine 179, asparagine 206, and asparagine 228. A Mg(2+)-binding site is contributed by glutamate 71. Residue glutamate 254 is part of the active site.

Belongs to the tubulin family. As to quaternary structure, dimer of alpha and beta chains. A typical microtubule is a hollow water-filled tube with an outer diameter of 25 nm and an inner diameter of 15 nM. Alpha-beta heterodimers associate head-to-tail to form protofilaments running lengthwise along the microtubule wall with the beta-tubulin subunit facing the microtubule plus end conferring a structural polarity. Microtubules usually have 13 protofilaments but different protofilament numbers can be found in some organisms and specialized cells. It depends on Mg(2+) as a cofactor. In terms of processing, undergoes a tyrosination/detyrosination cycle, the cyclic removal and re-addition of a C-terminal tyrosine residue by the enzymes tubulin tyrosine carboxypeptidase (TTCP) and tubulin tyrosine ligase (TTL), respectively. Post-translationally, acetylation of alpha chains at Lys-40 stabilizes microtubules and affects affinity and processivity of microtubule motors. This modification has a role in multiple cellular functions, ranging from cell motility, cell cycle progression or cell differentiation to intracellular trafficking and signaling. Actively expressed in the lens but does not seem to be lens-specific.

It is found in the cytoplasm. The protein localises to the cytoskeleton. The catalysed reaction is GTP + H2O = GDP + phosphate + H(+). In terms of biological role, tubulin is the major constituent of microtubules, a cylinder consisting of laterally associated linear protofilaments composed of alpha- and beta-tubulin heterodimers. Microtubules grow by the addition of GTP-tubulin dimers to the microtubule end, where a stabilizing cap forms. Below the cap, tubulin dimers are in GDP-bound state, owing to GTPase activity of alpha-tubulin. This chain is Tubulin alpha chain, found in Enteroctopus dofleini (North Pacific giant octopus).